Consider the following 249-residue polypeptide: Inhibitor of growth protein 4 (249 aa).

The stretch at 25–118 (FQLMRDLDQR…ADLKEKQIES (94 aa)) forms a coiled coil. N6-acetyllysine is present on residues Lys112, Lys127, and Lys129. Positions 115–163 (QIESSDYDSSSSKGKKKGRTQKEKKAARARSKGKNSDEEAPKAAQKKLK) are disordered. The short motif at 127–148 (KGKKKGRTQKEKKAARARSKGK) is the Bipartite nuclear localization signal element. Residue Arg133 is modified to Citrulline. Lys146, Lys148, and Lys156 each carry N6-acetyllysine. The residue at position 166 (Arg166) is a Citrulline. A PHD-type zinc finger spans residues 196–245 (PTYCLCHQVSYGEMIGCDNPDCSIEWFHFACVGLTTKPRGKWFCPRCSQE). Zn(2+) is bound by residues Cys199, Cys201, Cys212, Cys217, His223, Cys226, Cys239, and Cys242.

The protein belongs to the ING family. As to quaternary structure, homodimer. Component of the HBO1 complex composed of KAT7/HBO1, MEAF6, ING4 or ING5, and one scaffold subunit: complexes containing BRPF scaffold (BRPF1, BRD1/BRPF2 or BRPF3) direct KAT7/HBO1 specificity towards H3K14ac, while complexes containing JADE scaffold (JADE1, JADE2 and JADE3) mediate acetylation of histone H4. Interacts with H3K4me3 and to a lesser extent with H3K4me2, the interaction augments KAT7/HBO1 acetylation activity on H3 tails. Interacts with EP300, RELA and TP53; these interactions may be indirect. Interacts with EGLN1. In terms of assembly, interacts with BCL2A1. Post-translationally, citrullination by PADI4 within the nuclear localization signal disrupts the interaction with p53 and increases susceptibility to degradation. In terms of tissue distribution, isoform 2, isoform 3, isoform 4 and isoform 5 are expressed in the mammary gland, ovary, spleen and muscle. Expressed in the mammary gland, ovary, spleen and muscle.

It localises to the nucleus. In terms of biological role, component of HBO1 complexes, which specifically mediate acetylation of histone H3 at 'Lys-14' (H3K14ac), and have reduced activity toward histone H4. Through chromatin acetylation it may function in DNA replication. May inhibit tumor progression by modulating the transcriptional output of signaling pathways which regulate cell proliferation. Can suppress brain tumor angiogenesis through transcriptional repression of RELA/NFKB3 target genes when complexed with RELA. May also specifically suppress loss of contact inhibition elicited by activated oncogenes such as MYC. Represses hypoxia inducible factor's (HIF) activity by interacting with HIF prolyl hydroxylase 2 (EGLN1). Can enhance apoptosis induced by serum starvation in mammary epithelial cell line HC11. The polypeptide is Inhibitor of growth protein 4 (Ing4) (Mus musculus (Mouse)).